The following is a 314-amino-acid chain: Adenosine receptor A3 (314 aa).

The Extracellular portion of the chain corresponds to 1–14; the sequence is MAVNGTALLLANVT. Asn-4 and Asn-12 each carry an N-linked (GlcNAc...) asparagine glycan. A helical transmembrane segment spans residues 15 to 37; the sequence is YITVEILIGLCAIVGNVLVIWVV. Topologically, residues 38-48 are cytoplasmic; sequence KLNPSLQTTTF. The helical transmembrane segment at 49 to 72 threads the bilayer; the sequence is YFIVSLALADIAVGVLVMPLAIVI. Over 73 to 84 the chain is Extracellular; sequence SLGITIQFYNCL. Cys-83 and Cys-166 are oxidised to a cystine. Residues 85 to 106 traverse the membrane as a helical segment; the sequence is FMTCLLLIFTHASIMSLLAIAV. Topologically, residues 107–126 are cytoplasmic; it reads DRYLRVKLTVRYRRVTTQRR. The helical transmembrane segment at 127–148 threads the bilayer; sequence IWLALGLCWLVSFLVGLTPMFG. Topologically, residues 149-177 are extracellular; it reads WNMKLTSEHQRNVTFLSCQFSSVMRMDYM. Residue Asn-160 is glycosylated (N-linked (GlcNAc...) asparagine). A helical transmembrane segment spans residues 178-198; the sequence is VYFSFFTWILIPLVVMCAIYL. Over 199-231 the chain is Cytoplasmic; it reads DIFYVIRNKLNQNFSSSKETGAFYGREFKTAKS. A helical transmembrane segment spans residues 232–255; it reads LFLVLFLFAFSWLPLSIINCITYF. The Extracellular portion of the chain corresponds to 256–261; sequence HGEVPQ. Residues 262 to 284 traverse the membrane as a helical segment; the sequence is IILYLGILLSHANSMMNPIVYAY. Residues 285–314 are Cytoplasmic-facing; it reads KIKKFKETYLLIFKTYMICQSSDSLDSSTE. Cys-303 carries the S-palmitoyl cysteine lipid modification.

The protein belongs to the G-protein coupled receptor 1 family.

Its subcellular location is the cell membrane. Its function is as follows. Receptor for adenosine. The activity of this receptor is mediated by G proteins which inhibits adenylyl cyclase. The protein is Adenosine receptor A3 (ADORA3) of Canis lupus familiaris (Dog).